Here is a 303-residue protein sequence, read N- to C-terminus: 2-phospho-L-lactate transferase (303 aa).

7,8-didemethyl-8-hydroxy-5-deazariboflavin is bound by residues aspartate 48 and lysine 87.

Belongs to the CofD family. Homodimer. Requires Mg(2+) as cofactor.

The catalysed reaction is (2S)-lactyl-2-diphospho-5'-guanosine + 7,8-didemethyl-8-hydroxy-5-deazariboflavin = oxidized coenzyme F420-0 + GMP + H(+). Its pathway is cofactor biosynthesis; coenzyme F420 biosynthesis. Catalyzes the transfer of the 2-phospholactate moiety from (2S)-lactyl-2-diphospho-5'-guanosine to 7,8-didemethyl-8-hydroxy-5-deazariboflavin (FO) with the formation of oxidized coenzyme F420-0 and GMP. The protein is 2-phospho-L-lactate transferase of Methanosarcina mazei (strain ATCC BAA-159 / DSM 3647 / Goe1 / Go1 / JCM 11833 / OCM 88) (Methanosarcina frisia).